Here is a 317-residue protein sequence, read N- to C-terminus: Putative GTPase PH0274 (317 aa).

GTP is bound by residues 54–62, D196, and 231–233; these read GPPGAGKST and VGT.

Belongs to the SIMIBI class G3E GTPase family. ArgK/MeaB subfamily.

In terms of biological role, may have GTPase activity. May also bind and hydrolyze ATP. May function as chaperone. This Pyrococcus horikoshii (strain ATCC 700860 / DSM 12428 / JCM 9974 / NBRC 100139 / OT-3) protein is Putative GTPase PH0274.